The sequence spans 99 residues: Ferredoxin (99 aa).

One can recognise a 2Fe-2S ferredoxin-type domain in the interval 4-96; that stretch reads YKIHLLCEEE…DCTISTHVEQ (93 aa). [2Fe-2S] cluster-binding residues include Cys42, Cys47, Cys50, and Cys80.

The protein belongs to the 2Fe2S plant-type ferredoxin family. In terms of assembly, forms a complex with heterodimeric ferredoxin-thioredoxin reductase (FTR) and thioredoxin. Requires [2Fe-2S] cluster as cofactor.

The protein localises to the plastid. It is found in the chloroplast. Ferredoxins are iron-sulfur proteins that transfer electrons in a wide variety of metabolic reactions. This Pyropia yezoensis (Susabi-nori) protein is Ferredoxin (petF).